Here is a 92-residue protein sequence, read N- to C-terminus: MSRSLKKGPFIADSLLTKIEKLNEKGDKQVIKTWSRASTIIPAMIGHTIAVHNGKQHVPIFISEQMVGHKLGEFAPTRTFRGHSKGDKKARR.

The protein belongs to the universal ribosomal protein uS19 family.

In terms of biological role, protein S19 forms a complex with S13 that binds strongly to the 16S ribosomal RNA. This is Small ribosomal subunit protein uS19 from Crocosphaera subtropica (strain ATCC 51142 / BH68) (Cyanothece sp. (strain ATCC 51142)).